Reading from the N-terminus, the 275-residue chain is Methylthioribulose-1-phosphate dehydratase (275 aa).

Cys125 contributes to the substrate binding site. 2 residues coordinate Zn(2+): His143 and His145. The active-site Proton donor/acceptor is the Glu168. Position 233 (His233) interacts with Zn(2+).

This sequence belongs to the aldolase class II family. MtnB subfamily. The cofactor is Zn(2+).

Its subcellular location is the cytoplasm. The enzyme catalyses 5-(methylsulfanyl)-D-ribulose 1-phosphate = 5-methylsulfanyl-2,3-dioxopentyl phosphate + H2O. It participates in amino-acid biosynthesis; L-methionine biosynthesis via salvage pathway; L-methionine from S-methyl-5-thio-alpha-D-ribose 1-phosphate: step 2/6. Functionally, catalyzes the dehydration of methylthioribulose-1-phosphate (MTRu-1-P) into 2,3-diketo-5-methylthiopentyl-1-phosphate (DK-MTP-1-P). The polypeptide is Methylthioribulose-1-phosphate dehydratase (Lodderomyces elongisporus (strain ATCC 11503 / CBS 2605 / JCM 1781 / NBRC 1676 / NRRL YB-4239) (Yeast)).